The following is a 350-amino-acid chain: Fe-S cluster assembly protein dre2 (350 aa).

The segment at 23-156 (TSFNLRTLLL…KPDHSASVAV (134 aa)) is N-terminal SAM-like domain. The interval 157 to 242 (PLRLRRKDNS…EDTLLTEEDM (86 aa)) is linker. A disordered region spans residues 165–209 (NSKTTAVSNAGPPVSTVEVPVSGKRKSVDMTEDVPEKDVPKNDVP). Over residues 190–208 (KSVDMTEDVPEKDVPKNDV) the composition is skewed to basic and acidic residues. [2Fe-2S] cluster contacts are provided by Cys-252, Cys-263, Cys-266, and Cys-268. The tract at residues 252–268 (CAPRAGKRRRACKDCTC) is fe-S binding site A. 4 residues coordinate [4Fe-4S] cluster: Cys-313, Cys-316, Cys-324, and Cys-327. Short sequence motifs (cx2C motif) lie at residues 313–316 (CGNC) and 324–327 (CDGC). The tract at residues 313-327 (CGNCSLGDAFRCDGC) is fe-S binding site B.

This sequence belongs to the anamorsin family. As to quaternary structure, monomer. Interacts with TAH18. Interacts with MIA40. Requires [2Fe-2S] cluster as cofactor. It depends on [4Fe-4S] cluster as a cofactor.

The protein resides in the cytoplasm. It is found in the mitochondrion intermembrane space. Its function is as follows. Component of the cytosolic iron-sulfur (Fe-S) protein assembly (CIA) machinery required for the maturation of extramitochondrial Fe-S proteins. Part of an electron transfer chain functioning in an early step of cytosolic Fe-S biogenesis, facilitating the de novo assembly of a [4Fe-4S] cluster on the scaffold complex CFD1-NBP35. Electrons are transferred to DRE2 from NADPH via the FAD- and FMN-containing protein TAH18. TAH18-DRE2 are also required for the assembly of the diferric tyrosyl radical cofactor of ribonucleotide reductase (RNR), probably by providing electrons for reduction during radical cofactor maturation in the catalytic small subunit RNR2. The sequence is that of Fe-S cluster assembly protein dre2 from Sclerotinia sclerotiorum (strain ATCC 18683 / 1980 / Ss-1) (White mold).